Reading from the N-terminus, the 378-residue chain is Beta-1,3-galactosyltransferase 4 (378 aa).

Over 1–8 the chain is Cytoplasmic; sequence MQLRLFRR. A helical; Signal-anchor for type II membrane protein membrane pass occupies residues 9–19; the sequence is LLLAALLLVIV. Over 20-378 the chain is Lumenal; sequence WTLFGPSGLG…RCRAIAWLQS (359 aa). The N-linked (GlcNAc...) asparagine glycan is linked to Asn-149.

Belongs to the glycosyltransferase 31 family. Highly expressed in heart, skeletal muscle and pancreas and, to a lesser extent, in brain, placenta, kidney, liver and lung.

Its subcellular location is the golgi apparatus membrane. It carries out the reaction a ganglioside GM2 (d18:1(4E)) + UDP-alpha-D-galactose = a ganglioside GM1 (d18:1(4E)) + UDP + H(+). It catalyses the reaction a ganglioside GM2 + UDP-alpha-D-galactose = a ganglioside GM1 + UDP + H(+). The enzyme catalyses a ganglioside GD2 (d18:1(4E)) + UDP-alpha-D-galactose = a ganglioside GD1b (d18:1(4E)) + UDP + H(+). The catalysed reaction is a ganglioside GA2 (d18:1(4E)) + UDP-alpha-D-galactose = a ganglioside GA1 (d18:1(4E)) + UDP + H(+). It participates in protein modification; protein glycosylation. In terms of biological role, involved in GM1/GD1B/GA1 ganglioside biosynthesis. The protein is Beta-1,3-galactosyltransferase 4 of Homo sapiens (Human).